The following is a 71-amino-acid chain: uncharacterized protein (71 aa).

Residues 12–34 (GYLSLTLVTLPVCSSLHCYFLWT) form a helical membrane-spanning segment.

It localises to the membrane. This is an uncharacterized protein from Dictyostelium discoideum (Social amoeba).